Reading from the N-terminus, the 375-residue chain is uncharacterized protein (375 aa).

Topologically, residues 1-2 (MR) are cytoplasmic. A helical; Signal-anchor for type II membrane protein transmembrane segment spans residues 3 to 23 (WYSYVIPAVILSIIAISGVWW). Residues 24-375 (NATLGTRLDQ…YIEQRLFPQP (352 aa)) lie on the Lumenal side of the membrane.

It belongs to the glycosyltransferase 34 family.

Its subcellular location is the endoplasmic reticulum membrane. The protein localises to the golgi apparatus membrane. This is an uncharacterized protein from Schizosaccharomyces pombe (strain 972 / ATCC 24843) (Fission yeast).